The chain runs to 330 residues: Diacylglycerol acyltransferase/mycolyltransferase Ag85B (330 aa).

A signal peptide spans Met-1–Ala-40. Leu-82–Arg-83 is a binding site for substrate. A fibronectin-binding region spans residues Phe-98–Val-108. Residues Cys-127 and Cys-132 are joined by a disulfide bond. Positions 166 and 194 each coordinate substrate. Ser-166 acts as the Nucleophile in catalysis. Glu-270 is an active-site residue. Residues Phe-272–Ser-275, Lys-279, and His-302–Trp-304 each bind substrate. His-302 is a catalytic residue.

This sequence belongs to the mycobacterial A85 antigen family.

Its subcellular location is the secreted. The catalysed reaction is 2 alpha,alpha'-trehalose 6-mycolate = alpha,alpha'-trehalose 6,6'-bismycolate + alpha,alpha-trehalose. It carries out the reaction an acyl-CoA + a 1,2-diacyl-sn-glycerol = a triacyl-sn-glycerol + CoA. The antigen 85 proteins (FbpA, FbpB, FbpC) are responsible for the high affinity of mycobacteria for fibronectin, a large adhesive glycoprotein, which facilitates the attachment of M.tuberculosis to murine alveolar macrophages (AMs). They also help to maintain the integrity of the cell wall by catalyzing the transfer of mycolic acids to cell wall arabinogalactan and through the synthesis of alpha,alpha-trehalose dimycolate (TDM, cord factor). They catalyze the transfer of a mycoloyl residue from one molecule of alpha,alpha-trehalose monomycolate (TMM) to another TMM, leading to the formation of TDM. The polypeptide is Diacylglycerol acyltransferase/mycolyltransferase Ag85B (fbpB) (Mycobacterium intracellulare (strain ATCC 13950 / DSM 43223 / JCM 6384 / NCTC 13025 / 3600)).